Reading from the N-terminus, the 50-residue chain is MAQKKASLACADCGNRNYSISVSSTPKPTRLEVNKFCKNCKKYTLHKETR.

The protein belongs to the bacterial ribosomal protein bL33 family.

The protein is Large ribosomal subunit protein bL33A of Streptococcus thermophilus (strain CNRZ 1066).